A 389-amino-acid polypeptide reads, in one-letter code: Phospho-N-acetylmuramoyl-pentapeptide-transferase (389 aa).

Helical transmembrane passes span 25 to 45 (RAVM…PWVI), 74 to 94 (MGGV…CDWG), 97 to 117 (FIWV…VDDY), 134 to 154 (FFWQ…SVSE), 190 to 210 (VSYP…IVGS), 222 to 242 (GLVI…AYVM), 259 to 279 (AGEL…FLWF), 286 to 306 (VFMG…VAVI), 311 to 331 (IVLF…MLQV), and 366 to 386 (QVTV…LSTL).

This sequence belongs to the glycosyltransferase 4 family. MraY subfamily. Requires Mg(2+) as cofactor.

Its subcellular location is the cell inner membrane. It carries out the reaction UDP-N-acetyl-alpha-D-muramoyl-L-alanyl-gamma-D-glutamyl-meso-2,6-diaminopimeloyl-D-alanyl-D-alanine + di-trans,octa-cis-undecaprenyl phosphate = di-trans,octa-cis-undecaprenyl diphospho-N-acetyl-alpha-D-muramoyl-L-alanyl-D-glutamyl-meso-2,6-diaminopimeloyl-D-alanyl-D-alanine + UMP. It participates in cell wall biogenesis; peptidoglycan biosynthesis. Functionally, catalyzes the initial step of the lipid cycle reactions in the biosynthesis of the cell wall peptidoglycan: transfers peptidoglycan precursor phospho-MurNAc-pentapeptide from UDP-MurNAc-pentapeptide onto the lipid carrier undecaprenyl phosphate, yielding undecaprenyl-pyrophosphoryl-MurNAc-pentapeptide, known as lipid I. The protein is Phospho-N-acetylmuramoyl-pentapeptide-transferase of Cupriavidus pinatubonensis (strain JMP 134 / LMG 1197) (Cupriavidus necator (strain JMP 134)).